The following is a 297-amino-acid chain: Formamidopyrimidine-DNA glycosylase (297 aa).

Residue P2 is the Schiff-base intermediate with DNA of the active site. The active-site Proton donor is E3. K58 functions as the Proton donor; for beta-elimination activity in the catalytic mechanism. The DNA site is built by H106, R133, and R178. The segment at 263–297 adopts an FPG-type zinc-finger fold; it reads FVYDRAGEPCRICGTPIRQILQGQRSTFYCPHCQH. The active-site Proton donor; for delta-elimination activity is R287.

The protein belongs to the FPG family. Monomer. Zn(2+) is required as a cofactor.

It carries out the reaction Hydrolysis of DNA containing ring-opened 7-methylguanine residues, releasing 2,6-diamino-4-hydroxy-5-(N-methyl)formamidopyrimidine.. The enzyme catalyses 2'-deoxyribonucleotide-(2'-deoxyribose 5'-phosphate)-2'-deoxyribonucleotide-DNA = a 3'-end 2'-deoxyribonucleotide-(2,3-dehydro-2,3-deoxyribose 5'-phosphate)-DNA + a 5'-end 5'-phospho-2'-deoxyribonucleoside-DNA + H(+). Its function is as follows. Involved in base excision repair of DNA damaged by oxidation or by mutagenic agents. Acts as a DNA glycosylase that recognizes and removes damaged bases. Has a preference for oxidized purines, such as 7,8-dihydro-8-oxoguanine (8-oxoG). Has AP (apurinic/apyrimidinic) lyase activity and introduces nicks in the DNA strand. Cleaves the DNA backbone by beta-delta elimination to generate a single-strand break at the site of the removed base with both 3'- and 5'-phosphates. This chain is Formamidopyrimidine-DNA glycosylase, found in Cupriavidus metallidurans (strain ATCC 43123 / DSM 2839 / NBRC 102507 / CH34) (Ralstonia metallidurans).